Reading from the N-terminus, the 365-residue chain is MSVRRFLVWILALTVGAAPVMADRLKDLSRIKGVRNNQLVGYGLVVGLDGTGDKAPFTNQTFRNMMNQFGITLPDGVNPKLANVAAVTVSATLPAFAKAGQELDITVSSIGNADSLRGGTLLMTPLKGADGQVYAMAQGSLVVGGFGAQGQDGSRITVNVPSVGRIPNGATIEREVESPFNRGDTITFNLLRSDFTTARRVVEAINGRLGPDMAYAHDATSISVRAPRDPSQRVSFLSILENIEVDPAQEAARVVINSRTGTIVVGQNVKVSPAAITHGNLTVTIQENPEVVQPNPLAQGDTAVQQNTQIAVTEDPARMFQFGPATTLNEIVQAVNQVGAAPGDVMAVLEALKQAGALRAELIVI.

An N-terminal signal peptide occupies residues 1-22 (MSVRRFLVWILALTVGAAPVMA).

The protein belongs to the FlgI family. In terms of assembly, the basal body constitutes a major portion of the flagellar organelle and consists of four rings (L,P,S, and M) mounted on a central rod.

The protein localises to the periplasm. It localises to the bacterial flagellum basal body. Assembles around the rod to form the L-ring and probably protects the motor/basal body from shearing forces during rotation. The sequence is that of Flagellar P-ring protein from Marinobacter nauticus (strain ATCC 700491 / DSM 11845 / VT8) (Marinobacter aquaeolei).